The following is a 116-amino-acid chain: Regulator of ribonuclease activity B (116 aa).

Belongs to the RraB family. In terms of assembly, interacts with the C-terminal region of Rne.

The protein resides in the cytoplasm. Functionally, globally modulates RNA abundance by binding to RNase E (Rne) and regulating its endonucleolytic activity. Can modulate Rne action in a substrate-dependent manner by altering the composition of the degradosome. The sequence is that of Regulator of ribonuclease activity B from Colwellia psychrerythraea (strain 34H / ATCC BAA-681) (Vibrio psychroerythus).